The sequence spans 82 residues: Putative membrane protein insertion efficiency factor (82 aa).

The interval 63–82 is disordered; sequence GGFDPVPLKKDKNSKTTHHH.

Belongs to the UPF0161 family.

The protein resides in the cell membrane. In terms of biological role, could be involved in insertion of integral membrane proteins into the membrane. The protein is Putative membrane protein insertion efficiency factor of Staphylococcus epidermidis (strain ATCC 35984 / DSM 28319 / BCRC 17069 / CCUG 31568 / BM 3577 / RP62A).